Here is a 334-residue protein sequence, read N- to C-terminus: Siroheme decarboxylase (334 aa).

Histidine 93 is an active-site residue.

The protein belongs to the Ahb/Nir family.

It carries out the reaction siroheme + 2 H(+) = 12,18-didecarboxysiroheme + 2 CO2. It participates in porphyrin-containing compound metabolism. Functionally, involved in heme d1 biosynthesis. Catalyzes the decarboxylation of siroheme into didecarboxysiroheme. Siroheme is probably decarboxylated to monodecarboxysiroheme, which is in turn decarboxylated to didecarboxysiroheme. The protein is Siroheme decarboxylase of Hydrogenobacter thermophilus (strain DSM 6534 / IAM 12695 / TK-6).